The sequence spans 342 residues: S-adenosylmethionine:tRNA ribosyltransferase-isomerase (342 aa).

This sequence belongs to the QueA family. In terms of assembly, monomer.

The protein localises to the cytoplasm. It carries out the reaction 7-aminomethyl-7-carbaguanosine(34) in tRNA + S-adenosyl-L-methionine = epoxyqueuosine(34) in tRNA + adenine + L-methionine + 2 H(+). It participates in tRNA modification; tRNA-queuosine biosynthesis. Functionally, transfers and isomerizes the ribose moiety from AdoMet to the 7-aminomethyl group of 7-deazaguanine (preQ1-tRNA) to give epoxyqueuosine (oQ-tRNA). The polypeptide is S-adenosylmethionine:tRNA ribosyltransferase-isomerase (Geobacillus kaustophilus (strain HTA426)).